A 642-amino-acid polypeptide reads, in one-letter code: Threonine--tRNA ligase (642 aa).

Positions 1–61 (MPVVTLPDGS…DSDANLAIIT (61 aa)) constitute a TGS domain. Residues 243–534 (DHRKIGKQLD…LTEEYAGFFP (292 aa)) are catalytic. The Zn(2+) site is built by Cys-334, His-385, and His-511.

The protein belongs to the class-II aminoacyl-tRNA synthetase family. Homodimer. Requires Zn(2+) as cofactor.

The protein resides in the cytoplasm. It carries out the reaction tRNA(Thr) + L-threonine + ATP = L-threonyl-tRNA(Thr) + AMP + diphosphate + H(+). Its function is as follows. Catalyzes the attachment of threonine to tRNA(Thr) in a two-step reaction: L-threonine is first activated by ATP to form Thr-AMP and then transferred to the acceptor end of tRNA(Thr). Also edits incorrectly charged L-seryl-tRNA(Thr). This is Threonine--tRNA ligase from Photorhabdus laumondii subsp. laumondii (strain DSM 15139 / CIP 105565 / TT01) (Photorhabdus luminescens subsp. laumondii).